The sequence spans 290 residues: Shikimate dehydrogenase (NADP(+)) (290 aa).

Shikimate is bound by residues 20-22 (SLS) and threonine 67. The Proton acceptor role is filled by lysine 71. The shikimate site is built by asparagine 92 and aspartate 107. NADP(+) contacts are provided by residues 132 to 136 (GAGGA) and methionine 228. Tyrosine 230 lines the shikimate pocket. NADP(+) is bound at residue glycine 251.

This sequence belongs to the shikimate dehydrogenase family. Homodimer.

The enzyme catalyses shikimate + NADP(+) = 3-dehydroshikimate + NADPH + H(+). The protein operates within metabolic intermediate biosynthesis; chorismate biosynthesis; chorismate from D-erythrose 4-phosphate and phosphoenolpyruvate: step 4/7. Functionally, involved in the biosynthesis of the chorismate, which leads to the biosynthesis of aromatic amino acids. Catalyzes the reversible NADPH linked reduction of 3-dehydroshikimate (DHSA) to yield shikimate (SA). The chain is Shikimate dehydrogenase (NADP(+)) from Geobacter sp. (strain M21).